We begin with the raw amino-acid sequence, 200 residues long: Probable molybdenum cofactor guanylyltransferase (200 aa).

GTP-binding positions include 9–11 (LAG), Lys21, Asp69, and Asp100. Position 100 (Asp100) interacts with Mg(2+).

It belongs to the MobA family. It depends on Mg(2+) as a cofactor.

The protein localises to the cytoplasm. The enzyme catalyses Mo-molybdopterin + GTP + H(+) = Mo-molybdopterin guanine dinucleotide + diphosphate. Transfers a GMP moiety from GTP to Mo-molybdopterin (Mo-MPT) cofactor (Moco or molybdenum cofactor) to form Mo-molybdopterin guanine dinucleotide (Mo-MGD) cofactor. This chain is Probable molybdenum cofactor guanylyltransferase, found in Bacillus anthracis (strain CDC 684 / NRRL 3495).